The sequence spans 680 residues: MTEDNAQLRRTWNDLAEKVRYHRDRYYNEQPEIPDADFDALFKQLQQLEEDHPELAVPDSPTMVVGAPVAEQSSFDNVEHLERMLSLDNVFDEQELRDWLGRTPAKQYLTELKIDGLSIDLVYRNGQLERAATRGDGRVGEDITANARVIEDIPHQLQGTDEYPVPAVLEIRGEVFITVEDFPEVNAQRIADGGKPFANPRNAAAGSLRQKNIEDVKKRRLRMISHGIGFTEGFSPASQHDAYLALAAWGLPTSPYTEAVTDPEDVVKKVSYWADHRHDALHEMDGLVIKVDDIASQRALGSTSRAPRWAIAYKYPPEEVTTKLLDIQVGVGRTGRVTPFAVMEPVLVAGSTVSMATLHNQSEVKRKGVLIGDTVVIRKAGEVIPEVLGPVVELRDGTEREYIFPTLCPECGTRLAPAKADDVDWRCPNMQSCPGQLSTRLTYLAGRGAFDIEALGEKGAEDLIRTGILLDESGLFDLTEDDLLSSNVYTTNAGKVNASGKKLLDNLQKSKQTDLWRVLVALSIRHVGPTAARALAGRYHSIQALIDAPLEELSETDGVGTIIAQSFKDWFEVDWHKAIVDKWAAAGVTMEEEVGEVAEQTLEGLTIVVTGGLEGFTRDSVKEAIISRGGKASGSVSKKTDYVVVGENAGSKATKAEELGLRILDEAGFVRLLNTGSADE.

NAD(+)-binding positions include Asp-35–Asp-39, Ser-86–Leu-87, and Glu-111. The N6-AMP-lysine intermediate role is filled by Lys-113. NAD(+)-binding residues include Arg-134, Glu-174, Lys-290, and Lys-314. Zn(2+)-binding residues include Cys-408, Cys-411, Cys-427, and Cys-433. The region spanning Val-597–Glu-680 is the BRCT domain.

It belongs to the NAD-dependent DNA ligase family. LigA subfamily. Mg(2+) is required as a cofactor. The cofactor is Mn(2+).

The enzyme catalyses NAD(+) + (deoxyribonucleotide)n-3'-hydroxyl + 5'-phospho-(deoxyribonucleotide)m = (deoxyribonucleotide)n+m + AMP + beta-nicotinamide D-nucleotide.. DNA ligase that catalyzes the formation of phosphodiester linkages between 5'-phosphoryl and 3'-hydroxyl groups in double-stranded DNA using NAD as a coenzyme and as the energy source for the reaction. It is essential for DNA replication and repair of damaged DNA. This Corynebacterium glutamicum (strain R) protein is DNA ligase.